The sequence spans 638 residues: Chaperone protein DnaK (638 aa).

A Phosphothreonine; by autocatalysis modification is found at T199. The segment covering 603-618 has biased composition (low complexity); that stretch reads YAQPGAEAGAEQQGSA. Residues 603–638 are disordered; sequence YAQPGAEAGAEQQGSANNADDDIVDAEFEEVNDDKK. The segment covering 621-638 has biased composition (acidic residues); sequence ADDDIVDAEFEEVNDDKK.

The protein belongs to the heat shock protein 70 family.

In terms of biological role, acts as a chaperone. The protein is Chaperone protein DnaK of Hydrogenovibrio crunogenus (strain DSM 25203 / XCL-2) (Thiomicrospira crunogena).